The primary structure comprises 113 residues: Cholecystoxin (113 aa).

Residues 1 to 20 (MYGGICLCVLLAVLAISSSG) form the signal peptide. Residues 21–79 (QHISRSLNGNSLAAAIEQNFPEKHRPARTPDSNQRVESNIDEKANLGVLLARYLQKARR) constitute a propeptide that is removed on maturation. Residues 77–97 (ARRGTNGKPPDPKKESQDYLG) are disordered. Sulfotyrosine is present on Tyr95. Position 101 is a phenylalanine amide (Phe101). A propeptide spanning residues 102–113 (GRRSAEEYEYSS) is cleaved from the precursor.

Belongs to the gastrin/cholecystokinin family. Expressed by the mandibular venom gland.

Its subcellular location is the secreted. Functionally, cholecystokinin-22: hypotensive neuropeptide that binds cholecystokinin receptor type A receptor (CCKAR). Cholecystokinin-8: hypotensive neuropeptide that binds cholecystokinin receptor type A receptor (CCKAR). This is Cholecystoxin from Varanus varius (Lace monitor lizard).